The sequence spans 160 residues: Twist-related protein 2 (160 aa).

Residues M1–E63 form a disordered region. Over residues K27–K37 the composition is skewed to basic residues. The 52-residue stretch at S66–L117 folds into the bHLH domain.

As to quaternary structure, efficient DNA binding requires dimerization with another bHLH protein. Forms a heterodimer with TCF3/E12. Also interacts with MEF2C. Expressed at low levels in sclerotome and dermatome of somites, and in limb buds at 10.5 dpc. Accumulates predominantly in dermatome, prevertebrae and derivatives of branchial arches by 13 dpc. Also expressed near surface of embryo and in chondrogenic cells. In adult, expressed at low levels in skin, bladder, uterus, aorta and heart.

The protein resides in the nucleus. It localises to the cytoplasm. Its function is as follows. Binds to the E-box consensus sequence 5'-CANNTG-3' as a heterodimer and inhibits transcriptional activation by MYOD1, MYOG, MEF2A and MEF2C. Also represses expression of pro-inflammatory cytokines such as TNFA and IL1B. Involved in postnatal glycogen storage and energy metabolism. Inhibits the premature or ectopic differentiation of preosteoblast cells during osteogenesis, possibly by changing the internal signal transduction response of osteoblasts to external growth factors. The polypeptide is Twist-related protein 2 (Twist2) (Mus musculus (Mouse)).